Here is a 282-residue protein sequence, read N- to C-terminus: tRNA pseudouridine synthase B (282 aa).

D39 (nucleophile) is an active-site residue.

Belongs to the pseudouridine synthase TruB family. Type 1 subfamily.

It carries out the reaction uridine(55) in tRNA = pseudouridine(55) in tRNA. Functionally, responsible for synthesis of pseudouridine from uracil-55 in the psi GC loop of transfer RNAs. The sequence is that of tRNA pseudouridine synthase B from Borreliella afzelii (strain PKo) (Borrelia afzelii).